The chain runs to 306 residues: Ribonuclease H2 subunit B (306 aa).

The segment at 232-285 is disordered; it reads LPDLSSPTPEPPVKKRKVSEAPVEAEEDYTKFNSDSKNKKSNSKMTAAQKSLAK. Basic and acidic residues predominate over residues 259 to 269; sequence DYTKFNSDSKN.

This sequence belongs to the RNase H2 subunit B family. As to quaternary structure, the RNase H2 complex is a heterotrimer composed of the catalytic subunit rnaseh2a and the non-catalytic subunits rnaseh2b and rnaseh2c.

The protein localises to the nucleus. In terms of biological role, non catalytic subunit of RNase H2, an endonuclease that specifically degrades the RNA of RNA:DNA hybrids. Participates in DNA replication, possibly by mediating the removal of lagging-strand Okazaki fragment RNA primers during DNA replication. Mediates the excision of single ribonucleotides from DNA:RNA duplexes. The protein is Ribonuclease H2 subunit B (rnaseh2b) of Xenopus tropicalis (Western clawed frog).